The chain runs to 169 residues: Transcription antitermination protein NusB (169 aa).

The protein belongs to the NusB family.

Involved in transcription antitermination. Required for transcription of ribosomal RNA (rRNA) genes. Binds specifically to the boxA antiterminator sequence of the ribosomal RNA (rrn) operons. This chain is Transcription antitermination protein NusB, found in Deinococcus geothermalis (strain DSM 11300 / CIP 105573 / AG-3a).